Reading from the N-terminus, the 116-residue chain is Regulator of ribonuclease activity B (116 aa).

This sequence belongs to the RraB family. Interacts with the C-terminal region of Rne.

It is found in the cytoplasm. Its function is as follows. Globally modulates RNA abundance by binding to RNase E (Rne) and regulating its endonucleolytic activity. Can modulate Rne action in a substrate-dependent manner by altering the composition of the degradosome. The protein is Regulator of ribonuclease activity B of Colwellia psychrerythraea (strain 34H / ATCC BAA-681) (Vibrio psychroerythus).